Consider the following 356-residue polypeptide: D-alanine--D-alanine ligase (356 aa).

The ATP-grasp domain maps to 134 to 339; it reads KQLFEHRGLP…YPELITKLIE (206 aa). 167–222 contributes to the ATP binding site; the sequence is NDKLNYPVFVKPANLGSSVGISKCNNEAELKEGIKEAFQFDRKLVIEQGVNAREIE. Asp-293, Glu-306, and Asn-308 together coordinate Mg(2+).

Belongs to the D-alanine--D-alanine ligase family. The cofactor is Mg(2+). Mn(2+) is required as a cofactor.

The protein localises to the cytoplasm. It carries out the reaction 2 D-alanine + ATP = D-alanyl-D-alanine + ADP + phosphate + H(+). It functions in the pathway cell wall biogenesis; peptidoglycan biosynthesis. Cell wall formation. This chain is D-alanine--D-alanine ligase, found in Staphylococcus aureus (strain Mu3 / ATCC 700698).